The following is a 551-amino-acid chain: MGEINRRNFLKVSILGAAAAAVASASAVKGMVSPLVADAADIVAPITETSEFPYKVDAKYQRYNSLKNFFEKTFDPEANKTPIKFHYDDVSKITGKKDTGKDLPTLNAERLGIKGRPATHTETSILFHTQHLGAMLTQRHNETGWTGLDEALNAGAWAVEFDYSGFNATGGGPGSVIPLYPINPMTNEIANEPVMVPGLYNWDNIDVESVRQQGQQWKFESKEEASKIVKKATRLLGADLVGIAPYDERWTYSTWGRKIYKPCKMPNGRTKYLPWDLPKMLSGGGVEVFGHAKFEPDWEKYAGFKPKSVIVFVLEEDYEAIRTSPSVISSATVGKSYSNMAEVAYKIAVFLRKLGYYAAPCGNDTGISVPMAVQAGLGEAGRNGLLITQKFGPRHRIAKVYTDLELAPDKPRKFGVREFCRLCKKCADACPAQAISHEKDPKVLQPEDCEVAENPYTEKWHLDSNRCGSFWAYNGSPCSNCVAVCSWNKVETWNHDVARIATQIPLLQDAARKFDEWFGYNGPVNPDERLESGYVQNMVKDFWNNPESIKQ.

Positions 1–39 (MGEINRRNFLKVSILGAAAAAVASASAVKGMVSPLVADA) form a signal peptide, tat-type signal. One can recognise a 4Fe-4S ferredoxin-type 1 domain in the interval 411–440 (PRKFGVREFCRLCKKCADACPAQAISHEKD). Positions 420, 423, 426, 430, 467, 478, 481, and 485 each coordinate [4Fe-4S] cluster. The region spanning 478-496 (CSNCVAVCSWNKVETWNHD) is the 4Fe-4S ferredoxin-type 2 domain.

It belongs to the PceA family. The cofactor is [4Fe-4S] cluster. Corrinoid is required as a cofactor. Predicted to be exported by the Tat system. The position of the signal peptide cleavage has not been experimentally proven.

The protein resides in the cell membrane. It carries out the reaction trichloroethene + chloride + A + H(+) = tetrachloroethene + AH2. The enzyme catalyses trichloroethene + AH2 = (Z)-1,2-dichloroethene + chloride + A + H(+). Catalyzes the reductive dechlorination of tetrachloroethene (PCE) to trichloroethene (TCE) and of trichloroethene to cis-1,2-dichloroethene (DCE). The polypeptide is Tetrachloroethene reductive dehalogenase (Desulfitobacterium hafniense (Desulfitobacterium frappieri)).